Consider the following 1100-residue polypeptide: cGMP-inhibited 3',5'-cyclic phosphodiesterase 3B (1100 aa).

Residues 1–11 (MRKDERERDAP) are compositionally biased toward basic and acidic residues. The segment at 1-28 (MRKDERERDAPAMRSPPPPPASAASPPE) is interaction with RAPGEF3. A disordered region spans residues 1 to 29 (MRKDERERDAPAMRSPPPPPASAASPPES). At Ser-15 the chain carries Phosphoserine. 6 helical membrane passes run 69–89 (AGAR…LLGA), 110–130 (LSLS…CFLT), 140–160 (AGSW…FAAW), 170–190 (PAAA…TLAP), 198–218 (VLVL…LGAL), and 225–245 (LLSC…DHFF). The residue at position 273 (Ser-273) is a Phosphoserine; by PKB/AKT1 or PKB/AKT2. A phosphoserine mark is found at Ser-274 and Ser-421. Disordered stretches follow at residues 400–423 (RKLH…SSGA) and 570–590 (EPDG…SVFS). The span at 408-423 (GRTSFPTPQLRRSSGA) shows a compositional bias: polar residues. The interaction with PIK3R6 stretch occupies residues 415–439 (PQLRRSSGASSLLTNEHCSRWDRSS). Residues 573–583 (GTDHPSEKSGE) show a composition bias toward basic and acidic residues. Positions 627–1061 (PNIDQEVSLD…KIWKEIIEEE (435 aa)) constitute a PDEase domain. The active-site Proton donor is the His-713. His-713 is a binding site for AMP. Residues His-717, His-797, Asp-798, and Asp-913 each contribute to the Mg(2+) site. The AMP site is built by Asp-798, Asp-913, and Gln-964. A compositionally biased stretch (acidic residues) spans 993–1024 (EEGDDTESDDDDDDDDGDGGEELDSDDEETED). The tract at residues 993 to 1033 (EEGDDTESDDDDDDDDGDGGEELDSDDEETEDNLNPKPQRR) is disordered. Positions 1044–1079 (MHHLTENHKIWKEIIEEEEEKCKAEGNKLQVDNASL) form a coiled coil.

It belongs to the cyclic nucleotide phosphodiesterase family. PDE3 subfamily. In terms of assembly, homodimer. Interacts with PIK3CG; regulates PDE3B activity and thereby cAMP levels in cells. Interacts with RAPGEF3 and PIK3R6; form a signaling complex that regulates phosphatidylinositol 3-kinase gamma in angiogenesis. Interacts with ABHD15; this interaction regulates PDE3B's stability and expression and, thereby, impacts the antilipolytic action of insulin. Requires Mg(2+) as cofactor. It depends on Mn(2+) as a cofactor. In terms of processing, phosphorylation at Ser-273 mediates insulin-induced activation of PDE3B. Abundant in adipose tissues.

The protein localises to the membrane. The enzyme catalyses a nucleoside 3',5'-cyclic phosphate + H2O = a nucleoside 5'-phosphate + H(+). The catalysed reaction is 3',5'-cyclic AMP + H2O = AMP + H(+). It carries out the reaction 3',5'-cyclic GMP + H2O = GMP + H(+). With respect to regulation, inhibited by cGMP. Functionally, cyclic nucleotide phosphodiesterase with a dual-specificity for the second messengers cAMP and cGMP, which are key regulators of many important physiological processes. Regulates angiogenesis by inhibiting the cAMP-dependent guanine nucleotide exchange factor RAPGEF3 and downstream phosphatidylinositol 3-kinase gamma-mediated signaling. Controls cardiac contractility by reducing cAMP concentration in cardiocytes. This chain is cGMP-inhibited 3',5'-cyclic phosphodiesterase 3B, found in Mus musculus (Mouse).